The primary structure comprises 562 residues: Formate--tetrahydrofolate ligase (562 aa).

71-78 (TPAGEGKS) contributes to the ATP binding site.

Belongs to the formate--tetrahydrofolate ligase family.

It catalyses the reaction (6S)-5,6,7,8-tetrahydrofolate + formate + ATP = (6R)-10-formyltetrahydrofolate + ADP + phosphate. Its pathway is one-carbon metabolism; tetrahydrofolate interconversion. In Bacillus cereus (strain AH187), this protein is Formate--tetrahydrofolate ligase.